The following is a 150-amino-acid chain: Macrodomain Ter protein (150 aa).

This sequence belongs to the MatP family. In terms of assembly, homodimer.

Its subcellular location is the cytoplasm. Its function is as follows. Required for spatial organization of the terminus region of the chromosome (Ter macrodomain) during the cell cycle. Prevents early segregation of duplicated Ter macrodomains during cell division. Binds specifically to matS, which is a 13 bp signature motif repeated within the Ter macrodomain. The sequence is that of Macrodomain Ter protein from Salmonella arizonae (strain ATCC BAA-731 / CDC346-86 / RSK2980).